The sequence spans 361 residues: MATPAVPVSAPPATPAPVPAAAPVSAPASVPAPTPAPAAAPVPAAAPASSSDPAAAAATTAAPGQTPASAQAPAQTPAPALPGPALPGPFPGGRVVRLHPVILASIVDSYERRNEGAARVIGTLLGTVDKHSVEVTNCFSVPHNESEDEVAVDMEFAKNMYELHKKVSPNELILGWYATGHDITEHSVLIHEYYSREAPNPIHLTVDTSLQNGRMSIKAYVSTLMGVPGRTMGVMFTPLTVKYAYYDTERIGVDLIMKTCFSPNRVIGLSSDLQQVGGASARIQDALSTVLQYAEDVLSGKVSADNTVGRFLMSLVNQVPKIVPDDFETMLNSNINDLLMVTYLANLTQSQIALNEKLVNL.

Residues methionine 1 to leucine 86 are disordered. An N-acetylalanine modification is found at alanine 2. Pro residues-rich tracts occupy residues serine 9–alanine 20 and valine 30–alanine 40. A compositionally biased stretch (low complexity) spans proline 41–alanine 78. Serine 50 carries the phosphoserine; by CDK11; in vitro modification. In terms of domain architecture, MPN spans valine 96 to glycine 226. Lysine 242 is modified (N6-acetyllysine). Serine 262 carries the phosphoserine modification.

It belongs to the eIF-3 subunit F family. In terms of assembly, component of the eukaryotic translation initiation factor 3 (eIF-3) complex, which is composed of 13 subunits: EIF3A, EIF3B, EIF3C, EIF3D, EIF3E, EIF3F, EIF3G, EIF3H, EIF3I, EIF3J, EIF3K, EIF3L and EIF3M. The eIF-3 complex appears to include 3 stable modules: module A is composed of EIF3A, EIF3B, EIF3G and EIF3I; module B is composed of EIF3F, EIF3H, and EIF3M; and module C is composed of EIF3C, EIF3D, EIF3E, EIF3K and EIF3L. EIF3C of module C binds EIF3B of module A and EIF3H of module B, thereby linking the three modules. EIF3J is a labile subunit that binds to the eIF-3 complex via EIF3B. The eIF-3 complex interacts with RPS6KB1 under conditions of nutrient depletion. Mitogenic stimulation leads to binding and activation of a complex composed of MTOR and RPTOR, leading to phosphorylation and release of RPS6KB1 and binding of EIF4B to eIF-3. Interacts with RNF139; the interaction leads to protein translation inhibitions in a ubiquitination-dependent manner. Interacts with DTX1, the interaction is required for deubiquitinating activity towards NOTCH1. Post-translationally, phosphorylation is enhanced upon serum stimulation. Phosphorylated during apoptosis by caspase-processed CDK11.

Its subcellular location is the cytoplasm. The catalysed reaction is Thiol-dependent hydrolysis of ester, thioester, amide, peptide and isopeptide bonds formed by the C-terminal Gly of ubiquitin (a 76-residue protein attached to proteins as an intracellular targeting signal).. Its function is as follows. Component of the eukaryotic translation initiation factor 3 (eIF-3) complex, which is required for several steps in the initiation of protein synthesis. The eIF-3 complex associates with the 40S ribosome and facilitates the recruitment of eIF-1, eIF-1A, eIF-2:GTP:methionyl-tRNAi and eIF-5 to form the 43S pre-initiation complex (43S PIC). The eIF-3 complex stimulates mRNA recruitment to the 43S PIC and scanning of the mRNA for AUG recognition. The eIF-3 complex is also required for disassembly and recycling of post-termination ribosomal complexes and subsequently prevents premature joining of the 40S and 60S ribosomal subunits prior to initiation. The eIF-3 complex specifically targets and initiates translation of a subset of mRNAs involved in cell proliferation, including cell cycling, differentiation and apoptosis, and uses different modes of RNA stem-loop binding to exert either translational activation or repression. In terms of biological role, deubiquitinates activated NOTCH1, promoting its nuclear import, thereby acting as a positive regulator of Notch signaling. The sequence is that of Eukaryotic translation initiation factor 3 subunit F from Pan troglodytes (Chimpanzee).